The chain runs to 118 residues: Vacuolar ATPase assembly integral membrane protein vma-21 (118 aa).

Residues 1 to 35 (MATRRIISQEKTLLEKDDRIGSSPAASEKSNITPA) are Cytoplasmic-facing. The helical transmembrane segment at 36–56 (VPASVIIKLLAFTFAMIVIPI) threads the bilayer. Residues 57 to 73 (SSYFLTVDRLFKGNSTY) are Lumenal-facing. The chain crosses the membrane as a helical span at residues 74–94 (AGATAAIMANVVLIGYIIVAM). Residues 95 to 118 (AEDQSDQENEKKGGGGKGEGKKDL) are Cytoplasmic-facing. The tract at residues 98–118 (QSDQENEKKGGGGKGEGKKDL) is disordered. Basic and acidic residues predominate over residues 102 to 118 (ENEKKGGGGKGEGKKDL). Residues 115–118 (KKDL) carry the Prevents secretion from ER motif.

The protein belongs to the VMA21 family.

Its subcellular location is the endoplasmic reticulum membrane. It localises to the endoplasmic reticulum-Golgi intermediate compartment membrane. It is found in the cytoplasmic vesicle. The protein localises to the COPII-coated vesicle membrane. In terms of biological role, required for the assembly of the V0 complex of the vacuolar ATPase (V-ATPase) in the endoplasmic reticulum. The chain is Vacuolar ATPase assembly integral membrane protein vma-21 (vma-21) from Neurospora crassa (strain ATCC 24698 / 74-OR23-1A / CBS 708.71 / DSM 1257 / FGSC 987).